Consider the following 352-residue polypeptide: Phosphate acyltransferase (352 aa).

It belongs to the PlsX family. As to quaternary structure, homodimer. Probably interacts with PlsY.

Its subcellular location is the cytoplasm. It carries out the reaction a fatty acyl-[ACP] + phosphate = an acyl phosphate + holo-[ACP]. Its pathway is lipid metabolism; phospholipid metabolism. Catalyzes the reversible formation of acyl-phosphate (acyl-PO(4)) from acyl-[acyl-carrier-protein] (acyl-ACP). This enzyme utilizes acyl-ACP as fatty acyl donor, but not acyl-CoA. The polypeptide is Phosphate acyltransferase (Brucella anthropi (strain ATCC 49188 / DSM 6882 / CCUG 24695 / JCM 21032 / LMG 3331 / NBRC 15819 / NCTC 12168 / Alc 37) (Ochrobactrum anthropi)).